We begin with the raw amino-acid sequence, 297 residues long: uncharacterized protein (297 aa).

The segment covering 1–12 (MASYSFQFSTDA) has biased composition (polar residues). A disordered region spans residues 1–21 (MASYSFQFSTDATGKPGAAKP).

To B.subtilis XkdY/XepA.

This is an uncharacterized protein from Bacillus subtilis (strain 168).